A 97-amino-acid chain; its full sequence is Lipolysis-activating peptide 1-alpha chain (97 aa).

The signal sequence occupies residues 1-21 (MNITLFCSVFILISLAGLSVS). The 64-residue stretch at 25–88 (PGNYPMSLYG…FWAAHKNHCK (64 aa)) folds into the LCN-type CS-alpha/beta domain. Intrachain disulfides connect Cys-39–Cys-62, Cys-48–Cys-67, and Cys-52–Cys-69.

The protein belongs to the long (3 C-C) scorpion toxin superfamily. Monomer (edited version) and heterodimer (non-edited version) of this alpha chain and a beta chain (AC D9U2A2). In terms of tissue distribution, expressed by the venom gland.

The protein localises to the secreted. Its function is as follows. The heterodimer non-edited LVP1 induces lipolysis in rat adipocytes. Induction of lipolysis by LVP1 appears to be mediated through the beta-2 adrenergic receptor pathway (ADRB2). In terms of biological role, the edited BmKBTx-like, similar to beta-toxins, may modulate voltage-gated sodium channels (Nav) and may block voltage-gated potassium channels (Kv). In Lychas mucronatus (Chinese swimming scorpion), this protein is Lipolysis-activating peptide 1-alpha chain.